Reading from the N-terminus, the 520-residue chain is U3 small nucleolar RNA-associated protein 15 homolog (520 aa).

7 WD repeats span residues 36-75 (KEFGAINKIDFSPVPPYNYAVTASSRVHIYGRYSQEPIKT), 78-117 (RFKDAAYCATYRDDGKLLVAGSEEGSIRLFDISGRAPLRQ), 120-159 (GHTKAVHVVGFLSDKYRIFSGGDDYSSSLWDIPSATEIVS), 162-202 (EHSD…SVMT), 204-242 (EHGHPVESVLLFPSGGLLVSAGGRYVKVWDVLKGGQLLV), 246-285 (NHHKTVTCLCLNSSGQRLLSGSLDRHVKIYSTTSYKVVHS), and 287-326 (NYATSILSLALSPEDETIIVGMTNGVLNVKHRKPEESKEK).

As to quaternary structure, part of the small subunit (SSU) processome, composed of more than 70 proteins and the RNA chaperone small nucleolar RNA (snoRNA) U3. May be a component of the proposed t-UTP subcomplex of the ribosomal small subunit (SSU) processome.

Its subcellular location is the nucleus. The protein resides in the nucleolus. Ribosome biogenesis factor. Involved in nucleolar processing of pre-18S ribosomal RNA. Required for optimal pre-ribosomal RNA transcription by RNA polymerase I. Part of the small subunit (SSU) processome, first precursor of the small eukaryotic ribosomal subunit. During the assembly of the SSU processome in the nucleolus, many ribosome biogenesis factors, an RNA chaperone and ribosomal proteins associate with the nascent pre-rRNA and work in concert to generate RNA folding, modifications, rearrangements and cleavage as well as targeted degradation of pre-ribosomal RNA by the RNA exosome. The sequence is that of U3 small nucleolar RNA-associated protein 15 homolog (UTP15) from Gallus gallus (Chicken).